The following is a 509-amino-acid chain: ATP synthase subunit alpha (509 aa).

169 to 176 (GDRQTGKT) is a binding site for ATP.

This sequence belongs to the ATPase alpha/beta chains family. In terms of assembly, F-type ATPases have 2 components, CF(1) - the catalytic core - and CF(0) - the membrane proton channel. CF(1) has five subunits: alpha(3), beta(3), gamma(1), delta(1), epsilon(1). CF(0) has three main subunits: a(1), b(2) and c(9-12). The alpha and beta chains form an alternating ring which encloses part of the gamma chain. CF(1) is attached to CF(0) by a central stalk formed by the gamma and epsilon chains, while a peripheral stalk is formed by the delta and b chains.

The protein resides in the cell inner membrane. It carries out the reaction ATP + H2O + 4 H(+)(in) = ADP + phosphate + 5 H(+)(out). In terms of biological role, produces ATP from ADP in the presence of a proton gradient across the membrane. The alpha chain is a regulatory subunit. The sequence is that of ATP synthase subunit alpha from Agrobacterium fabrum (strain C58 / ATCC 33970) (Agrobacterium tumefaciens (strain C58)).